Consider the following 352-residue polypeptide: Phenylalanine--tRNA ligase alpha subunit (352 aa).

Glutamate 258 serves as a coordination point for Mg(2+).

The protein belongs to the class-II aminoacyl-tRNA synthetase family. Phe-tRNA synthetase alpha subunit type 1 subfamily. Tetramer of two alpha and two beta subunits. The cofactor is Mg(2+).

It is found in the cytoplasm. It catalyses the reaction tRNA(Phe) + L-phenylalanine + ATP = L-phenylalanyl-tRNA(Phe) + AMP + diphosphate + H(+). The chain is Phenylalanine--tRNA ligase alpha subunit from Staphylococcus carnosus (strain TM300).